Reading from the N-terminus, the 224-residue chain is 7-cyano-7-deazaguanine synthase (224 aa).

12 to 22 (MSGGMDSTLGA) serves as a coordination point for ATP. Residues C191, C199, C202, and C205 each coordinate Zn(2+).

Belongs to the QueC family. Zn(2+) serves as cofactor.

It carries out the reaction 7-carboxy-7-deazaguanine + NH4(+) + ATP = 7-cyano-7-deazaguanine + ADP + phosphate + H2O + H(+). Its pathway is purine metabolism; 7-cyano-7-deazaguanine biosynthesis. Catalyzes the ATP-dependent conversion of 7-carboxy-7-deazaguanine (CDG) to 7-cyano-7-deazaguanine (preQ(0)). The sequence is that of 7-cyano-7-deazaguanine synthase from Sulfurimonas denitrificans (strain ATCC 33889 / DSM 1251) (Thiomicrospira denitrificans (strain ATCC 33889 / DSM 1251)).